The following is a 205-amino-acid chain: Small ribosomal subunit protein uS4 (205 aa).

A disordered region spans residues methionine 1–lysine 44. The region spanning serine 94–lysine 173 is the S4 RNA-binding domain.

The protein belongs to the universal ribosomal protein uS4 family. In terms of assembly, part of the 30S ribosomal subunit. Contacts protein S5. The interaction surface between S4 and S5 is involved in control of translational fidelity.

Its function is as follows. One of the primary rRNA binding proteins, it binds directly to 16S rRNA where it nucleates assembly of the body of the 30S subunit. In terms of biological role, with S5 and S12 plays an important role in translational accuracy. The chain is Small ribosomal subunit protein uS4 from Maricaulis maris (strain MCS10) (Caulobacter maris).